The sequence spans 760 residues: Xaa-Pro dipeptidyl-peptidase (760 aa).

Residues serine 349, aspartate 469, and histidine 499 each act as charge relay system in the active site.

It belongs to the peptidase S15 family. Homodimer.

Its subcellular location is the cytoplasm. It carries out the reaction Hydrolyzes Xaa-Pro-|- bonds to release unblocked, N-terminal dipeptides from substrates including Ala-Pro-|-p-nitroanilide and (sequentially) Tyr-Pro-|-Phe-Pro-|-Gly-Pro-|-Ile.. Functionally, removes N-terminal dipeptides sequentially from polypeptides having unsubstituted N-termini provided that the penultimate residue is proline. This chain is Xaa-Pro dipeptidyl-peptidase, found in Streptococcus pyogenes serotype M3 (strain ATCC BAA-595 / MGAS315).